A 224-amino-acid polypeptide reads, in one-letter code: Phosphoribosylformylglycinamidine synthase subunit PurQ (224 aa).

The region spanning 2–224 (TVAIIRFGGS…DGQGVLEGFR (223 aa)) is the Glutamine amidotransferase type-1 domain. C85 acts as the Nucleophile in catalysis. Catalysis depends on residues H202 and E204. The interval 204–224 (ERASLPDIGPTDGQGVLEGFR) is disordered.

As to quaternary structure, part of the FGAM synthase complex composed of 1 PurL, 1 PurQ and 2 PurS subunits.

The protein localises to the cytoplasm. The enzyme catalyses N(2)-formyl-N(1)-(5-phospho-beta-D-ribosyl)glycinamide + L-glutamine + ATP + H2O = 2-formamido-N(1)-(5-O-phospho-beta-D-ribosyl)acetamidine + L-glutamate + ADP + phosphate + H(+). It carries out the reaction L-glutamine + H2O = L-glutamate + NH4(+). Its pathway is purine metabolism; IMP biosynthesis via de novo pathway; 5-amino-1-(5-phospho-D-ribosyl)imidazole from N(2)-formyl-N(1)-(5-phospho-D-ribosyl)glycinamide: step 1/2. Part of the phosphoribosylformylglycinamidine synthase complex involved in the purines biosynthetic pathway. Catalyzes the ATP-dependent conversion of formylglycinamide ribonucleotide (FGAR) and glutamine to yield formylglycinamidine ribonucleotide (FGAM) and glutamate. The FGAM synthase complex is composed of three subunits. PurQ produces an ammonia molecule by converting glutamine to glutamate. PurL transfers the ammonia molecule to FGAR to form FGAM in an ATP-dependent manner. PurS interacts with PurQ and PurL and is thought to assist in the transfer of the ammonia molecule from PurQ to PurL. The sequence is that of Phosphoribosylformylglycinamidine synthase subunit PurQ from Natronomonas pharaonis (strain ATCC 35678 / DSM 2160 / CIP 103997 / JCM 8858 / NBRC 14720 / NCIMB 2260 / Gabara) (Halobacterium pharaonis).